A 120-amino-acid chain; its full sequence is uncharacterized protein (120 aa).

This is an uncharacterized protein from Aquifex aeolicus (strain VF5).